Consider the following 134-residue polypeptide: Small ribosomal subunit protein uS11 (134 aa).

Belongs to the universal ribosomal protein uS11 family. Part of the 30S ribosomal subunit. Interacts with proteins S7 and S18. Binds to IF-3.

Functionally, located on the platform of the 30S subunit, it bridges several disparate RNA helices of the 16S rRNA. Forms part of the Shine-Dalgarno cleft in the 70S ribosome. This Delftia acidovorans (strain DSM 14801 / SPH-1) protein is Small ribosomal subunit protein uS11.